The sequence spans 332 residues: Probable xyloglucan endotransglucosylase/hydrolase protein 28 (332 aa).

The signal sequence occupies residues 1–22 (MGFITRFLVFMSLFTSLVSGFA). Positions 23 to 223 (LQKLPLIQFD…YKYAPYVSQF (201 aa)) constitute a GH16 domain. The active-site Nucleophile is the glutamate 108. Glutamate 112 serves as the catalytic Proton donor. Xyloglucan contacts are provided by residues glutamate 112 and 125 to 127 (QTN). An N-linked (GlcNAc...) asparagine glycan is attached at asparagine 131. Xyloglucan contacts are provided by residues 135–139 (HLGRE), 202–203 (KW), glycine 207, and arginine 282. Cysteine 277 and cysteine 290 are oxidised to a cystine. Basic residues predominate over residues 313 to 326 (HGHRRGKHRSRSRL). The tract at residues 313–332 (HGHRRGKHRSRSRLARTESI) is disordered.

The protein belongs to the glycosyl hydrolase 16 family. XTH group 3 subfamily. Post-translationally, contains at least one intrachain disulfide bond essential for its enzymatic activity. As to expression, expressed in 7 day old seedlings, roots, rosette leaves, internodes between nodes bearing axillary shoots, nodes bearing flowers, flower buds and siliques.

The protein localises to the secreted. The protein resides in the cell wall. Its subcellular location is the extracellular space. It localises to the apoplast. The enzyme catalyses breaks a beta-(1-&gt;4) bond in the backbone of a xyloglucan and transfers the xyloglucanyl segment on to O-4 of the non-reducing terminal glucose residue of an acceptor, which can be a xyloglucan or an oligosaccharide of xyloglucan.. Catalyzes xyloglucan endohydrolysis (XEH) and/or endotransglycosylation (XET). Cleaves and religates xyloglucan polymers, an essential constituent of the primary cell wall, and thereby participates in cell wall construction of growing tissues. In Arabidopsis thaliana (Mouse-ear cress), this protein is Probable xyloglucan endotransglucosylase/hydrolase protein 28 (XTH28).